The following is a 503-amino-acid chain: Drimenol monooxygenase (503 aa).

A helical membrane pass occupies residues 7–23 (MICIVVSGLLLYSSRTS). Ser471 is a heme binding site.

This sequence belongs to the cytochrome P450 family. Requires heme as cofactor.

It is found in the membrane. It carries out the reaction (5S,9S,10S)-drim-7-en-11-ol + reduced [NADPH--hemoprotein reductase] + O2 = (5S,10S)-(9R)-7-drimene-11,12-diol + oxidized [NADPH--hemoprotein reductase] + H2O + H(+). In terms of biological role, catalyzes the conversion of drimenol to drimendiol, a precursor of the sesquiterpenoid polygodial. Polygodial has been shown to be an antifeedant for a number of herbivorous insects. This is Drimenol monooxygenase from Persicaria hydropiper (Marshpepper knotweed).